The following is a 315-amino-acid chain: Probable inactive acetaldehyde dehydrogenase 1 (315 aa).

Residues 14–17 (SGDV) and N288 contribute to the NAD(+) site.

Belongs to the acetaldehyde dehydrogenase family.

This Mycolicibacterium vanbaalenii (strain DSM 7251 / JCM 13017 / BCRC 16820 / KCTC 9966 / NRRL B-24157 / PYR-1) (Mycobacterium vanbaalenii) protein is Probable inactive acetaldehyde dehydrogenase 1.